The chain runs to 184 residues: Large ribosomal subunit protein uL5c (184 aa).

The protein belongs to the universal ribosomal protein uL5 family. Part of the 50S ribosomal subunit; contacts the 5S rRNA.

The protein localises to the plastid. The protein resides in the chloroplast. Its function is as follows. Binds 5S rRNA, forms part of the central protuberance of the 50S subunit. The polypeptide is Large ribosomal subunit protein uL5c (rpl5) (Zygnema circumcarinatum (Green alga)).